The sequence spans 320 residues: Cytochrome f (320 aa).

Residues 1–35 (MQTRNAFSWLKKQITRSISVSLMIYILTRTSISSA) form the signal peptide. 4 residues coordinate heme: Tyr36, Cys56, Cys59, and His60. A helical membrane pass occupies residues 286-306 (VQGLLFFLASVILAQIFLVLK).

The protein belongs to the cytochrome f family. As to quaternary structure, the 4 large subunits of the cytochrome b6-f complex are cytochrome b6, subunit IV (17 kDa polypeptide, petD), cytochrome f and the Rieske protein, while the 4 small subunits are PetG, PetL, PetM and PetN. The complex functions as a dimer. Heme serves as cofactor.

It localises to the plastid. The protein localises to the chloroplast thylakoid membrane. Component of the cytochrome b6-f complex, which mediates electron transfer between photosystem II (PSII) and photosystem I (PSI), cyclic electron flow around PSI, and state transitions. This is Cytochrome f from Solanum bulbocastanum (Wild potato).